A 467-amino-acid polypeptide reads, in one-letter code: Ergochrome gene cluster transcriptional coactivator CPUR_05432 (467 aa).

An HTH iclR-type domain is found at 109–179; sequence IAIQCEMLGS…RRGYVAHTPL (71 aa). The H-T-H motif DNA-binding region spans 139–158; it reads IQDVANLSNVPEQQLAQMIG.

The protein resides in the nucleus. Its function is as follows. Transcriptional coactivator; part of the gene cluster responsible for the typical purple-black color of the ergot sclerotia. The ergochrome gene cluster produces several ergot pigments including the yellow ergochrome secalonic acid and its derivatives, as well as the red anthraquinones endocrocin and clavorubin. With CPUR_05433, coregulates the production of geodin. The sequence is that of Ergochrome gene cluster transcriptional coactivator CPUR_05432 from Claviceps purpurea (strain 20.1) (Ergot fungus).